The following is a 249-amino-acid chain: T-cell immunoreceptor with Ig and ITIM domains (249 aa).

Residues methionine 1–glycine 28 form the signal peptide. Residues threonine 29–leucine 127 form the Ig-like V-type domain. Residues threonine 29 to glycine 148 lie on the Extracellular side of the membrane. Residues asparagine 35 to isoleucine 45 are homodimerization. Cysteines 48 and 111 form a disulfide. Asparagine 104 carries N-linked (GlcNAc...) asparagine glycosylation. A helical transmembrane segment spans residues glycine 149–alanine 169. Residues arginine 170–glycine 249 are Cytoplasmic-facing. Residues serine 182–aspartate 222 form a disordered region. A compositionally biased stretch (polar residues) spans asparagine 195–alanine 211. The ITIM motif signature appears at leucine 234–leucine 239.

Homodimer in cis; binds with high affinity to PVR, forming a heterotetrameric assembly of two TIGIT and two PVR molecules. Binds with lower affinity to NECTIN2 and NECTIN3. Interacts with GRB2. Interacts with NECTIN4.

Its subcellular location is the cell membrane. Inhibitory receptor that plays a role in the modulation of immune responses. Suppresses T-cell activation by promoting the generation of mature immunoregulatory dendritic cells. Upon binding to its ligands PVR/CD155 or NECTIN2/CD112, which are expressed on antigen-presenting cells, sends inhibitory signals to the T-cell or NK cell. Mechanistically, interaction with ligand leads to phosphorylation of the cytoplasmic tail by Src family tyrosine kinases such as FYN or LCK, allowing subsequent binding to adapter GRB2 and SHIP1/INPP5D. In turn, inhibits PI3K and MAPK signaling cascades. In addition, associates with beta-arrestin-2/ARRB2 to recruit SHIP1/INPP5D that suppresses autoubiquitination of TRAF6 and subsequently inhibits NF-kappa-B signaling pathway. Also acts as a receptor for NECTIN4 to inhibit NK cell cytotoxicity. This Mus musculus (Mouse) protein is T-cell immunoreceptor with Ig and ITIM domains.